Consider the following 549-residue polypeptide: Cation/acetate symporter ActP (549 aa).

The Periplasmic portion of the chain corresponds to 1-32 (MKRVLTALAATLPFAANAADAISGAVERQPTN). A helical membrane pass occupies residues 33-55 (WQAIIMFLIFVVFTLGITYWASK). Residues 56-75 (RVRSRNDYYTAGGNITGFQN) are Cytoplasmic-facing. Residues 76-98 (GLAIAGDYMSAASFLGISALVFT) traverse the membrane as a helical segment. Over 99–102 (SGYD) the chain is Periplasmic. The chain crosses the membrane as a helical span at residues 103–125 (GLIYSLGFLVGWPIILFLIAERL). The Cytoplasmic portion of the chain corresponds to 126 to 145 (RNLGRYTFADVASYRLKQGP). A helical membrane pass occupies residues 146-168 (IRILSACGSLVVVALYLIAQMVG). The Periplasmic portion of the chain corresponds to 169–182 (AGKLIELLFGLNYH). A helical membrane pass occupies residues 183–205 (IAVVLVGVLMMMYVLFGGMLATT). Over 206 to 211 (WVQIIK) the chain is Cytoplasmic. The helical transmembrane segment at 212 to 234 (AVLLLFGASFMAFMVMKHVGFSF) threads the bilayer. The Periplasmic portion of the chain corresponds to 235 to 263 (NNLFSEAMAVHPKGVDIMKPGGLVKDPIS). A helical transmembrane segment spans residues 264 to 286 (ALSLGLGLMFGTAGLPHILMHFF). Topologically, residues 287-297 (TVSDAREARKS) are cytoplasmic. Residues 298-320 (VFYATGFMGYFYILTFIIGFGAI) traverse the membrane as a helical segment. At 321–358 (MLVGANPEYKDAAGHLIGGNNMAAVHLANAVGGNLFLG) the chain is on the periplasmic side. The chain crosses the membrane as a helical span at residues 359–381 (FISAVAFATILAVVAGLTLAGAS). At 382–401 (AVSHDLYANVFKKGATEREE) the chain is on the cytoplasmic side. A helical transmembrane segment spans residues 402–424 (LRVSKITVLILGVIAIILGVLFE). The Periplasmic segment spans residues 425 to 427 (NQN). A helical membrane pass occupies residues 428–450 (IAFMVGLAFAIAASCNFPIILLS). Residues 451–461 (MYWSKLTTRGA) are Cytoplasmic-facing. A helical transmembrane segment spans residues 462-484 (MLGGWLGLITAVVLMILGPTIWV). Over 485-493 (QILGHEKAI) the chain is Periplasmic. Residues 494-516 (FPYEYPALFSISVAFLGIWLFSA) form a helical membrane-spanning segment. Over 517-549 (TDNSAEGARERELFRAQFIRSQTGFGVEQGRAH) the chain is Cytoplasmic.

The protein belongs to the sodium:solute symporter (SSF) (TC 2.A.21) family.

It is found in the cell inner membrane. Its function is as follows. Transports acetate. This chain is Cation/acetate symporter ActP (actP), found in Escherichia coli O6:H1 (strain CFT073 / ATCC 700928 / UPEC).